The sequence spans 137 residues: Type III secretion protein HrcQb (137 aa).

A compositionally biased stretch (acidic residues) spans 1-22 (MSTEDLYQDDVESLEDYDDETA). A disordered region spans residues 1–67 (MSTEDLYQDD…EQQAPSGLDS (67 aa)). The segment covering 23 to 33 (EQEHEHEHEQQ) has biased composition (basic and acidic residues). Acidic residues predominate over residues 36–58 (EPDDESEYAEAEPDDDEQEEQEE).

This sequence belongs to the FliN/MopA/SpaO family. In terms of assembly, homotetramer. The four monomers assemble into two tightly bound homodimers. Interacts with HrcQa.

It is found in the cytoplasm. Functionally, component of the type III secretion system, which is required for effector protein delivery, parasitism, and pathogenicity. Probably participates in the formation of a C-ring-like assembly along with HrcQa. This is Type III secretion protein HrcQb (hrcQb) from Pseudomonas syringae pv. tomato (strain ATCC BAA-871 / DC3000).